We begin with the raw amino-acid sequence, 125 residues long: Prepro-urotensin II-gamma (125 aa).

The signal sequence occupies residues 1 to 21 (MMCNLLLSCSVLLLSCSHLLA). A propeptide spanning residues 109 to 111 (QFR) is cleaved from the precursor. Cysteines 119 and 124 form a disulfide.

It belongs to the urotensin-2 family.

The protein localises to the secreted. In terms of biological role, urotensin is found in the teleost caudal neurosecretory system. It has a suggested role in osmoregulation and as a corticotropin-releasing factor. The non-hormonal portion of this precursor may be a urotensin binding protein, urophysin. This chain is Prepro-urotensin II-gamma, found in Cyprinus carpio (Common carp).